A 41-amino-acid chain; its full sequence is MDSMANTVSSSVVNTGNKPSETLNKTVKNYTPKVPYMCVIA.

The disordered stretch occupies residues 1–25 (MDSMANTVSSSVVNTGNKPSETLNK). The propeptide occupies 1–29 (MDSMANTVSSSVVNTGNKPSETLNKTVKN). At C38 the chain carries Cysteine methyl ester. A lipid anchor (S-farnesyl cysteine) is attached at C38. The propeptide at 39–41 (VIA) is removed in mature form.

The protein resides in the secreted. Functionally, M-factor is a mating pheromone produced by M-type mating cells. All three mfm genes contribute to the production of M-factor. The chain is M-factor (mfm3) from Schizosaccharomyces pombe (strain 972 / ATCC 24843) (Fission yeast).